Consider the following 317-residue polypeptide: Probable cell division protein WhiA (317 aa).

The H-T-H motif DNA-binding region spans 275 to 308 (SLKELGEMLVPKVGKSGVNHRMRKIDELAEKLEE).

This sequence belongs to the WhiA family.

In terms of biological role, involved in cell division and chromosome segregation. The protein is Probable cell division protein WhiA of Desulfitobacterium hafniense (strain Y51).